The sequence spans 423 residues: Histidine--tRNA ligase (423 aa).

The protein belongs to the class-II aminoacyl-tRNA synthetase family. Homodimer.

The protein resides in the cytoplasm. The catalysed reaction is tRNA(His) + L-histidine + ATP = L-histidyl-tRNA(His) + AMP + diphosphate + H(+). The polypeptide is Histidine--tRNA ligase (Prochlorococcus marinus (strain NATL1A)).